Here is a 257-residue protein sequence, read N- to C-terminus: Phosphatidylglycerol--prolipoprotein diacylglyceryl transferase (257 aa).

Helical transmembrane passes span 12–32 (FSIRWYAICIVSGMLLAVYLA), 49–69 (FILMAFPLSIVGARIYYVIFE), 83–103 (IWNGGIAIYGGLITGAILLVI), and 109–129 (LINPIDFLDIAAPGVMIAQAI). An a 1,2-diacyl-sn-glycero-3-phospho-(1'-sn-glycerol)-binding site is contributed by Arg131. 3 helical membrane passes run 167–187 (VPTFLYESLWNFLGFVIIMSI), 197–217 (GEVACFYLVWYGCGRFIIEGM), and 226–246 (GLRVSQWLSVILVIIGIVMII).

The protein belongs to the Lgt family.

The protein resides in the cell membrane. The enzyme catalyses L-cysteinyl-[prolipoprotein] + a 1,2-diacyl-sn-glycero-3-phospho-(1'-sn-glycerol) = an S-1,2-diacyl-sn-glyceryl-L-cysteinyl-[prolipoprotein] + sn-glycerol 1-phosphate + H(+). Its pathway is protein modification; lipoprotein biosynthesis (diacylglyceryl transfer). Functionally, catalyzes the transfer of the diacylglyceryl group from phosphatidylglycerol to the sulfhydryl group of the N-terminal cysteine of a prolipoprotein, the first step in the formation of mature lipoproteins. The polypeptide is Phosphatidylglycerol--prolipoprotein diacylglyceryl transferase (Streptococcus agalactiae serotype Ia (strain ATCC 27591 / A909 / CDC SS700)).